Reading from the N-terminus, the 80-residue chain is Centromere protein X (80 aa).

Belongs to the CENP-X/MHF2 family. As to quaternary structure, heterodimer with CENPX, sometimes called MHF; this interaction stabilizes both partners. MHF heterodimers can assemble to form tetrameric structures. MHF also coassemble with CENPT-CENPW heterodimers at centromeres to form the tetrameric CENP-T-W-S-X complex. Forms a discrete complex with FANCM and CENPX, called FANCM-MHF; this interaction, probably mediated by direct binding between CENPS and FANCM, leads to synergistic activation of double-stranded DNA binding and strongly stimulates FANCM-mediated DNA remodeling. Recruited by FANCM to the Fanconi anemia (FA) core complex, which consists of CENPS, CENPX, FANCA, FANCB, FANCC, FANCE, FANCF, FANCG, FANCL, FANCM, FAAP24 and FAAP100. The FA core complex associates with Bloom syndrome (BLM) complex, which consists of at least BLM, DNA topoisomerase 3-alpha (TOP3A), RMI1/BLAP75, RPA1/RPA70 and RPA2/RPA32. The super complex between FA and BLM is called BRAFT.

Its subcellular location is the nucleus. It localises to the chromosome. The protein resides in the centromere. The protein localises to the kinetochore. Its function is as follows. DNA-binding component of the Fanconi anemia (FA) core complex. Required for the normal activation of the FA pathway, leading to monoubiquitination of the FANCI-FANCD2 complex in response to DNA damage, cellular resistance to DNA cross-linking drugs, and prevention of chromosomal breakage. In complex with CENPS (MHF heterodimer), crucial cofactor for FANCM in both binding and ATP-dependent remodeling of DNA. Stabilizes FANCM. In complex with CENPS and FANCM (but not other FANC proteins), rapidly recruited to blocked forks and promotes gene conversion at blocked replication forks. In complex with CENPS, CENPT and CENPW (CENP-T-W-S-X heterotetramer), involved in the formation of a functional kinetochore outer plate, which is essential for kinetochore-microtubule attachment and faithful mitotic progression. As a component of MHF and CENP-T-W-S-X complexes, binds DNA and bends it to form a nucleosome-like structure. DNA-binding function is fulfilled in the presence of CENPS, with the following preference for DNA substates: Holliday junction &gt; double-stranded &gt; splay arm &gt; single-stranded. Does not bind DNA on its own. The sequence is that of Centromere protein X (CENPX) from Gallus gallus (Chicken).